The primary structure comprises 669 residues: DNA ligase (669 aa).

NAD(+) contacts are provided by residues 34–38, 83–84, and Glu-114; these read DAEYD and SL. Lys-116 serves as the catalytic N6-AMP-lysine intermediate. Residues Arg-137, Glu-171, Lys-287, and Lys-311 each coordinate NAD(+). Zn(2+) is bound by residues Cys-405, Cys-408, Cys-423, and Cys-428. The BRCT domain occupies 591 to 669; sequence NVESYFAGKT…EERFLQELNK (79 aa).

The protein belongs to the NAD-dependent DNA ligase family. LigA subfamily. Mg(2+) is required as a cofactor. Mn(2+) serves as cofactor.

It catalyses the reaction NAD(+) + (deoxyribonucleotide)n-3'-hydroxyl + 5'-phospho-(deoxyribonucleotide)m = (deoxyribonucleotide)n+m + AMP + beta-nicotinamide D-nucleotide.. DNA ligase that catalyzes the formation of phosphodiester linkages between 5'-phosphoryl and 3'-hydroxyl groups in double-stranded DNA using NAD as a coenzyme and as the energy source for the reaction. It is essential for DNA replication and repair of damaged DNA. The protein is DNA ligase of Bacillus cereus (strain AH820).